A 318-amino-acid polypeptide reads, in one-letter code: Homoserine kinase (318 aa).

An ATP-binding site is contributed by 97-107 (PIGSGLGSSAC).

Belongs to the GHMP kinase family. Homoserine kinase subfamily.

The protein localises to the cytoplasm. It carries out the reaction L-homoserine + ATP = O-phospho-L-homoserine + ADP + H(+). The protein operates within amino-acid biosynthesis; L-threonine biosynthesis; L-threonine from L-aspartate: step 4/5. Its function is as follows. Catalyzes the ATP-dependent phosphorylation of L-homoserine to L-homoserine phosphate. This chain is Homoserine kinase, found in Aliivibrio salmonicida (strain LFI1238) (Vibrio salmonicida (strain LFI1238)).